The chain runs to 74 residues: ATP synthase subunit c (74 aa).

2 helical membrane passes run 9-29 (IAIA…ASIF) and 51-71 (LIGA…AILL).

It belongs to the ATPase C chain family. F-type ATPases have 2 components, F(1) - the catalytic core - and F(0) - the membrane proton channel. F(1) has five subunits: alpha(3), beta(3), gamma(1), delta(1), epsilon(1). F(0) has three main subunits: a(1), b(2) and c(10-14). The alpha and beta chains form an alternating ring which encloses part of the gamma chain. F(1) is attached to F(0) by a central stalk formed by the gamma and epsilon chains, while a peripheral stalk is formed by the delta and b chains.

Its subcellular location is the cell inner membrane. F(1)F(0) ATP synthase produces ATP from ADP in the presence of a proton or sodium gradient. F-type ATPases consist of two structural domains, F(1) containing the extramembraneous catalytic core and F(0) containing the membrane proton channel, linked together by a central stalk and a peripheral stalk. During catalysis, ATP synthesis in the catalytic domain of F(1) is coupled via a rotary mechanism of the central stalk subunits to proton translocation. Its function is as follows. Key component of the F(0) channel; it plays a direct role in translocation across the membrane. A homomeric c-ring of between 10-14 subunits forms the central stalk rotor element with the F(1) delta and epsilon subunits. This chain is ATP synthase subunit c, found in Orientia tsutsugamushi (strain Ikeda) (Rickettsia tsutsugamushi).